Reading from the N-terminus, the 547-residue chain is Serine/threonine-protein kinase RIO2 (547 aa).

The Protein kinase domain maps to 97 to 273 (VGNQMGVGKE…RDVKCIREFF (177 aa)). Residue K123 participates in ATP binding. The active-site Proton acceptor is the D228. A phosphoserine mark is found at S332, S337, S350, S362, S385, and S390. The tract at residues 352–385 (LEKEADPADESGGSWCCSSTDSKQIKDGGLPEES) is disordered. The short motif at 399 to 408 (AVEEMERQVL) is the Nuclear export signal element. The disordered stretch occupies residues 404-445 (ERQVLPHRSVTEFSEESRRTENDGQPGQRSPAGSEDCDDEPP). S412, S417, S433, S437, and S543 each carry phosphoserine.

Belongs to the protein kinase superfamily. RIO-type Ser/Thr kinase family. In terms of assembly, associated with late 40S pre-ribosomal particles. Interacts with PLK1 (via its N-terminus). It depends on Mg(2+) as a cofactor. Post-translationally, autophosphorylated (in vitro). Phosphorylation affects the timing of the metaphase-anaphase transition.

It localises to the cytoplasm. The catalysed reaction is L-seryl-[protein] + ATP = O-phospho-L-seryl-[protein] + ADP + H(+). It catalyses the reaction L-threonyl-[protein] + ATP = O-phospho-L-threonyl-[protein] + ADP + H(+). Its function is as follows. Serine/threonine-protein kinase involved in the final steps of cytoplasmic maturation of the 40S ribosomal subunit. Involved in export of the 40S pre-ribosome particles (pre-40S) from the nucleus to the cytoplasm. Its kinase activity is required for the release of NOB1, PNO1 and LTV1 from the late pre-40S and the processing of 18S-E pre-rRNA to the mature 18S rRNA. May regulate the timing of the metaphase-anaphase transition during mitotic progression, and its phosphorylation, may regulate this function. This Mus musculus (Mouse) protein is Serine/threonine-protein kinase RIO2 (Riok2).